A 487-amino-acid chain; its full sequence is Aromatic-L-amino-acid decarboxylase (487 aa).

Position 1 is an N-acetylmethionine (Met-1). Tandem repeats lie at residues 58 to 115 (EDIE…TELE) and 118 to 178 (MMDW…MQAA). Residues 58–178 (EDIEKIIMPG…AASPELMQAA (121 aa)) are 2 X approximate tandem repeats. Position 82 (Thr-82) interacts with substrate. The pyridoxal 5'-phosphate site is built by Ala-148 and Ser-149. Residue His-192 coordinates substrate. 2 residues coordinate pyridoxal 5'-phosphate: Thr-246 and Asn-300. At Lys-303 the chain carries N6-(pyridoxal phosphate)lysine.

It belongs to the group II decarboxylase family. As to quaternary structure, homodimer. Pyridoxal 5'-phosphate is required as a cofactor.

It catalyses the reaction L-dopa + H(+) = dopamine + CO2. The catalysed reaction is 5-hydroxy-L-tryptophan + H(+) = serotonin + CO2. The protein operates within catecholamine biosynthesis; dopamine biosynthesis; dopamine from L-tyrosine: step 2/2. Catalyzes the decarboxylation of L-3,4-dihydroxyphenylalanine (DOPA) to dopamine and L-5-hydroxytryptophan to serotonin. In Bos taurus (Bovine), this protein is Aromatic-L-amino-acid decarboxylase (DDC).